An 88-amino-acid polypeptide reads, in one-letter code: MAHKKGASSSRNGRDSAAQRLGVKRFGGQVVKAGEILVRQRGTHFHPGVNVGRGGDDTLFATAPGAVEFGTKRGRKYVNIVRVTRAEA.

The protein belongs to the bacterial ribosomal protein bL27 family.

The chain is Large ribosomal subunit protein bL27 from Mycolicibacterium vanbaalenii (strain DSM 7251 / JCM 13017 / BCRC 16820 / KCTC 9966 / NRRL B-24157 / PYR-1) (Mycobacterium vanbaalenii).